The primary structure comprises 385 residues: UPF0744 protein YSC83 (385 aa).

This sequence belongs to the UPF0744 family.

The protein resides in the mitochondrion outer membrane. The chain is UPF0744 protein YSC83 (YSC83) from Saccharomyces cerevisiae (strain ATCC 204508 / S288c) (Baker's yeast).